A 449-amino-acid polypeptide reads, in one-letter code: Deoxyguanosinetriphosphate triphosphohydrolase-like protein (449 aa).

The interval 1–27 (MTSSVWQERRHGEDKQRRNDHRSPYQR) is disordered. The span at 7 to 27 (QERRHGEDKQRRNDHRSPYQR) shows a compositional bias: basic and acidic residues. The region spanning 59–255 (RLTHSLEVSQ…MELADDIAYA (197 aa)) is the HD domain.

This sequence belongs to the dGTPase family. Type 2 subfamily.

The chain is Deoxyguanosinetriphosphate triphosphohydrolase-like protein from Shewanella baltica (strain OS185).